A 164-amino-acid polypeptide reads, in one-letter code: 2-C-methyl-D-erythritol 2,4-cyclodiphosphate synthase (164 aa).

Residues Asp9 and His11 each coordinate a divalent metal cation. Residues 9–11 (DAH) and 36–37 (HS) contribute to the 4-CDP-2-C-methyl-D-erythritol 2-phosphate site. A divalent metal cation is bound at residue His44. 4-CDP-2-C-methyl-D-erythritol 2-phosphate-binding positions include 58–60 (DLG), 63–67 (FPDSD), 134–137 (TTTE), Phe141, and Arg144.

It belongs to the IspF family. As to quaternary structure, homotrimer. The cofactor is a divalent metal cation.

It carries out the reaction 4-CDP-2-C-methyl-D-erythritol 2-phosphate = 2-C-methyl-D-erythritol 2,4-cyclic diphosphate + CMP. The protein operates within isoprenoid biosynthesis; isopentenyl diphosphate biosynthesis via DXP pathway; isopentenyl diphosphate from 1-deoxy-D-xylulose 5-phosphate: step 4/6. Involved in the biosynthesis of isopentenyl diphosphate (IPP) and dimethylallyl diphosphate (DMAPP), two major building blocks of isoprenoid compounds. Catalyzes the conversion of 4-diphosphocytidyl-2-C-methyl-D-erythritol 2-phosphate (CDP-ME2P) to 2-C-methyl-D-erythritol 2,4-cyclodiphosphate (ME-CPP) with a corresponding release of cytidine 5-monophosphate (CMP). The sequence is that of 2-C-methyl-D-erythritol 2,4-cyclodiphosphate synthase from Alkalilimnicola ehrlichii (strain ATCC BAA-1101 / DSM 17681 / MLHE-1).